A 592-amino-acid polypeptide reads, in one-letter code: Leucine-rich repeat and immunoglobulin-like domain-containing nogo receptor-interacting protein 3 (592 aa).

The first 24 residues, 1-24 (MTCWLCVLSLPLLLLPAAPPPAGG), serve as a signal peptide directing secretion. In terms of domain architecture, LRRNT spans 25 to 54 (CPARCECTVQTRAVACTRRRLTAVPDGIPA). At 25 to 531 (CPARCECTVQ…LDLTTILVST (507 aa)) the chain is on the extracellular side. LRR repeat units follow at residues 55-76 (ETRL…DLAA), 79-100 (ALEE…AFAN), 103-124 (RLRV…VFTR), 127-148 (NLTL…TFQD), 151-172 (SLRR…AFAG), 175-196 (ALEE…SLGH), 207-228 (HLAI…LHLE), 247-268 (NLTS…ALRH), 271-292 (HLTC…SFRD), 295-316 (RLRE…AFLG), and 319-340 (QIRL…TFHS). A glycan (N-linked (GlcNAc...) asparagine) is linked at N127. A glycan (N-linked (GlcNAc...) asparagine) is linked at N185. N-linked (GlcNAc...) asparagine glycosylation is found at N247, N257, and N276. A glycan (N-linked (GlcNAc...) asparagine) is linked at N324. Residues 352-406 (NPLACDCRLLWIVQRRKTLNFDGRLPACATPAEVRGDALRNLPDSVLFEYFVCRK) form the LRRCT domain. Positions 407–496 (PKIRERRLQR…GNDTYFATLT (90 aa)) constitute an Ig-like C2-type domain. A disulfide bridge links C429 with C480. N488 and N512 each carry an N-linked (GlcNAc...) asparagine glycan. Residues 532–552 (AMGCITFLGVVLFCFVLLFVW) traverse the membrane as a helical segment. The Cytoplasmic segment spans residues 553–592 (SRGRGQHKNNFSVEYSFRKVDGPAAAAGQGGARKFNMKMI).

It is found in the membrane. This chain is Leucine-rich repeat and immunoglobulin-like domain-containing nogo receptor-interacting protein 3 (LINGO3), found in Homo sapiens (Human).